Here is a 218-residue protein sequence, read N- to C-terminus: Probable 2-aminoethanethiol dioxygenase (218 aa).

Fe cation is required as a cofactor.

The enzyme catalyses cysteamine + O2 = hypotaurine + H(+). The chain is Probable 2-aminoethanethiol dioxygenase (ado-1) from Dictyostelium discoideum (Social amoeba).